The following is a 143-amino-acid chain: Protein STIG1 (143 aa).

Positions 1 to 23 (MDFIILLIAILALSSTPITIISG) are cleaved as a signal peptide. A sufficient for PI(4)P binding region spans residues 76–87 (RTCCFNYFCVDL). Residues 80-83 (FNYF) form a sufficient for binding to the extracellular domain of PRK2 region. Positions 88–115 (FTNRFNCGSCGLVCIVGTRCCGGICVDI) are sufficient for PI(3)P binding.

The protein belongs to the STIG1 family. Interacts with PRK1 and PRK2 (via extracellular domain). In terms of tissue distribution, expressed in the stigma and the upper section of the style.

The protein localises to the secreted. The protein resides in the extracellular space. It localises to the apoplast. In terms of biological role, promotes pollen tube growth. A C-terminal peptide is cleaved from the propeptide in the stigmatic exudate and represent the major form of STIG1. Binds phosphoinositol lipids. The binding of external phosphatidylinositol 3-phosphate (PI(3)P) and PRK2 by STIG1 induces a rapid intracellular reactive oxygen species elevation. This chain is Protein STIG1, found in Solanum lycopersicum (Tomato).